Here is a 152-residue protein sequence, read N- to C-terminus: Aspartate 1-decarboxylase (152 aa).

Residue Ser-24 is the Schiff-base intermediate with substrate; via pyruvic acid of the active site. Pyruvic acid (Ser) is present on Ser-24. Position 56 (Thr-56) interacts with substrate. Residue Tyr-57 is the Proton donor of the active site. 72–74 (GAA) contributes to the substrate binding site.

Belongs to the PanD family. Heterooctamer of four alpha and four beta subunits. The cofactor is pyruvate. Is synthesized initially as an inactive proenzyme, which is activated by self-cleavage at a specific serine bond to produce a beta-subunit with a hydroxyl group at its C-terminus and an alpha-subunit with a pyruvoyl group at its N-terminus.

Its subcellular location is the cytoplasm. It carries out the reaction L-aspartate + H(+) = beta-alanine + CO2. Its pathway is cofactor biosynthesis; (R)-pantothenate biosynthesis; beta-alanine from L-aspartate: step 1/1. Catalyzes the pyruvoyl-dependent decarboxylation of aspartate to produce beta-alanine. The protein is Aspartate 1-decarboxylase of Methylobacterium nodulans (strain LMG 21967 / CNCM I-2342 / ORS 2060).